The chain runs to 59 residues: Cuticle protein 7 isoform a (59 aa).

Glutamine 1 bears the Pyrrolidone carboxylic acid mark.

This chain is Cuticle protein 7 isoform a, found in Limulus polyphemus (Atlantic horseshoe crab).